The primary structure comprises 328 residues: Phenylalanine--tRNA ligase alpha subunit (328 aa).

Glu-245 is a Mg(2+) binding site.

Belongs to the class-II aminoacyl-tRNA synthetase family. Phe-tRNA synthetase alpha subunit type 1 subfamily. As to quaternary structure, tetramer of two alpha and two beta subunits. Mg(2+) is required as a cofactor.

The protein localises to the cytoplasm. It catalyses the reaction tRNA(Phe) + L-phenylalanine + ATP = L-phenylalanyl-tRNA(Phe) + AMP + diphosphate + H(+). The protein is Phenylalanine--tRNA ligase alpha subunit of Helicobacter acinonychis (strain Sheeba).